We begin with the raw amino-acid sequence, 148 residues long: Large ribosomal subunit protein uL15 (148 aa).

Positions 1–61 (MELNNLKPAI…GGQMPMQRRL (61 aa)) are disordered. Residues 30–39 (TATKGHKGQK) are compositionally biased toward basic residues.

Belongs to the universal ribosomal protein uL15 family. As to quaternary structure, part of the 50S ribosomal subunit.

In terms of biological role, binds to the 23S rRNA. The polypeptide is Large ribosomal subunit protein uL15 (Geobacter metallireducens (strain ATCC 53774 / DSM 7210 / GS-15)).